A 111-amino-acid chain; its full sequence is X antigen family member 2 (111 aa).

Disordered stretches follow at residues 1-61 (MSWR…AAEI) and 77-111 (KTGDGCEGGTDVKGKILPKAEHFKMPEAGEGKSQV). Residues 86 to 111 (TDVKGKILPKAEHFKMPEAGEGKSQV) are compositionally biased toward basic and acidic residues.

It belongs to the GAGE family.

The protein is X antigen family member 2 (XAGE2) of Homo sapiens (Human).